A 182-amino-acid chain; its full sequence is Putative manganese efflux pump MntP (182 aa).

6 helical membrane-spanning segments follow: residues 6–26 (LIPLIIMAFALGMDAFSVSLG), 37–57 (ILYIGVTIGIFHIIMPFIGMV), 71–91 (HFAGAILLIGLGFYIVYSSIL), 101–121 (IGISLFVFAFGVSIDSFSVGL), 131–151 (IITILLFGFVSMLLAWTGLFI), and 162–182 (YGEIVGGIILVGFGLYLLFPI).

Belongs to the MntP (TC 9.B.29) family.

It is found in the cell membrane. Functionally, probably functions as a manganese efflux pump. This is Putative manganese efflux pump MntP from Bacillus thuringiensis subsp. konkukian (strain 97-27).